Consider the following 100-residue polypeptide: Large ribosomal subunit protein bL21 (100 aa).

It belongs to the bacterial ribosomal protein bL21 family. In terms of assembly, part of the 50S ribosomal subunit. Contacts protein L20.

Its function is as follows. This protein binds to 23S rRNA in the presence of protein L20. In Rhodospirillum rubrum (strain ATCC 11170 / ATH 1.1.1 / DSM 467 / LMG 4362 / NCIMB 8255 / S1), this protein is Large ribosomal subunit protein bL21.